A 625-amino-acid chain; its full sequence is Mesothelin (625 aa).

Residues 1–35 (MALPTAQPLLGSCGSPICSRSFLLLLLSLGWLPLL) form the signal peptide. Residue S202 is modified to Phosphoserine. C304 and C328 are joined by a disulfide. N390, N488, and N517 each carry an N-linked (GlcNAc...) asparagine glycan. S600 carries the GPI-anchor amidated serine lipid modification. The propeptide at 601 to 625 (SGAPLLGPGFVFAWIPALLSALRLS) is removed in mature form.

This sequence belongs to the mesothelin family. Interacts with MUC16. Post-translationally, proteolytically cleaved by a furin-like convertase to generate megakaryocyte-potentiating factor (MPF), and the cleaved form of mesothelin. In terms of tissue distribution, specifically expressed in lung. Overexpressed in hereditary renal carcinoma developed by Eker rats.

It is found in the cell membrane. The protein resides in the golgi apparatus. Its subcellular location is the secreted. Membrane-anchored forms may play a role in cellular adhesion. Functionally, megakaryocyte-potentiating factor (MPF) may potentiate megakaryocyte colony formation. In Rattus norvegicus (Rat), this protein is Mesothelin (Msln).